The sequence spans 452 residues: Glycine receptor subunit alpha-2 (452 aa).

The first 27 residues, 1–27 (MNRQLVNILTALFAFFLETNHFRTAFC), serve as a signal peptide directing secretion. Topologically, residues 28–256 (KDHDSRSGKQ…KFHLERQMGY (229 aa)) are extracellular. Asn-72 carries an N-linked (GlcNAc...) asparagine glycan. Arg-99 lines the glycine pocket. Arg-99 is a strychnine binding site. Asn-103 is a glycosylation site (N-linked (GlcNAc...) asparagine). Ser-163 contributes to the glycine binding site. A disulfide bridge links Cys-172 with Cys-186. Zn(2+) contacts are provided by Glu-226 and Glu-228. Residues Cys-232 and Cys-243 are joined by a disulfide bond. Thr-238 contributes to the glycine binding site. His-249 serves as a coordination point for Zn(2+). A helical transmembrane segment spans residues 257-278 (YLIQMYIPSLLIVILSWVSFWI). Residues 279 to 283 (NMDAA) are Cytoplasmic-facing. Residues 284–304 (PARVALGITTVLTMTTQSSGS) form a helical membrane-spanning segment. Over 305–315 (RASLPKVSYVK) the chain is Extracellular. The chain crosses the membrane as a helical span at residues 316–336 (AIDIWMAVCLLFVFAALLEYA). At 337-420 (AVNFVSRQHK…FVDRAKRIDT (84 aa)) the chain is on the cytoplasmic side. The chain crosses the membrane as a helical span at residues 421 to 441 (ISRAAFPLAFLIFNIFYWITY). Over 442 to 452 (KIIRHEDVHKK) the chain is Extracellular.

This sequence belongs to the ligand-gated ion channel (TC 1.A.9) family. Glycine receptor (TC 1.A.9.3) subfamily. GLRA2 sub-subfamily. As to quaternary structure, interacts with GLRB. Heteropentamer composed of GLRA2 and GLRB. Functional GLRB-GLRA2 heteropentamers contain four GLRA2 subunits and one GLRB subunit, although alternative subunit composition cannot be excluded. Homopentamer (in vitro). Both homopentamers and heteropentamers form functional ion channels, but their characteristics are subtly different.

The protein localises to the postsynaptic cell membrane. It localises to the synapse. It is found in the cell membrane. Its subcellular location is the cell projection. It catalyses the reaction chloride(in) = chloride(out). With respect to regulation, channel opening is triggered by extracellular glycine. Channel opening is also triggered by taurine and beta-alanine. Inhibited by strychnine. Inhibited by picrotoxin. Channel activity is potentiated by 10-100 uM Zn(2+). Channel activity is marginally increased by 50 mM ethanol; it is strongly increased by a combination of 0.5 uM Zn(2+) and 50 mM ethanol. Channel activity is inhibited by 100-1000 uM Zn(2+). In terms of biological role, subunit of heteromeric glycine-gated chloride channels. Plays a role in synaptic plasticity. Contributes to the generation of inhibitory postsynaptic currents, and is involved in the down-regulation of neuronal excitability. Plays a role in cellular responses to ethanol. This chain is Glycine receptor subunit alpha-2, found in Homo sapiens (Human).